We begin with the raw amino-acid sequence, 680 residues long: Lipase 1 (680 aa).

The signal sequence occupies residues 1–34 (MKSQNKYSIRKFSVGASSILIATLLFLSGGQAQA). Positions 35-290 (AEKQVNMGNS…AKAKGDQTNK (256 aa)) are excised as a propeptide. Disordered stretches follow at residues 39–58 (VNMG…GDQQ) and 82–260 (KNLH…KNGL). Polar residues predominate over residues 40–58 (NMGNSQEDTVTAQSIGDQQ). The span at 84-112 (LHNDKTISEENHRKTDDLNKDQLKDDKKS) shows a compositional bias: basic and acidic residues. 2 stretches are compositionally biased toward polar residues: residues 162–193 (SQDL…SQRE) and 204–223 (QPQQ…FNNE). The span at 224–234 (QEVKPQKDEKT) shows a compositional bias: basic and acidic residues. Polar residues predominate over residues 235–246 (LSVSDLKNNQKS). Residue S408 is the Nucleophile of the active site. D600 acts as the Charge relay system in catalysis. A Ca(2+)-binding site is contributed by D638. H639 serves as the catalytic Charge relay system. Ca(2+) contacts are provided by D641, D646, and D649.

This sequence belongs to the AB hydrolase superfamily. Lipase family.

It localises to the secreted. The enzyme catalyses a triacylglycerol + H2O = a diacylglycerol + a fatty acid + H(+). The sequence is that of Lipase 1 (lip1) from Staphylococcus aureus (strain MRSA252).